Here is a 724-residue protein sequence, read N- to C-terminus: NAD(+) hydrolase SARM1 (724 aa).

The transit peptide at 1 to 27 (MVLTLLFSAYKLCRFFTMSGPRPGADR) directs the protein to the mitochondrion. Positions 24 to 56 (GADRLTVPGPDRSGGASPWWAAGGRGSREVSPG) are disordered. The segment covering 36-45 (SGGASPWWAA) has biased composition (low complexity). The ARM 1 repeat unit spans residues 60–100 (EVQGALERSLPELQQALSELKQASAARAVGAGLAEVFQLVE). Residues W103, R110, 149 to 157 (EQILVAENR), and 190 to 193 (HMFK) each bind NAD(+). 7 ARM repeats span residues 114 to 153 (QGLCDAIRLDGGLDLLLRLLQAPELETRVQAARLLEQILV), 155 to 193 (ENRDRVARIGLGVILNLAKEREPVELARSVAGILEHMFK), 196 to 235 (EETCQRLVAAGGLDAVLYWCRRTDPALLRHCALALANCAL), 237 to 280 (GGQT…LATN), 281 to 314 (KEVEREVEHSGTLALVEPLVASLDPGRFARCLVD), 315 to 354 (ASDTSQGRGPDDLQSLVLLLDSSRLEAQCIGAFYLCAEAA), and 359 to 402 (QGKT…EEVP). 2 SAM domains span residues 412–476 (WKEA…LKTF) and 486–548 (NLAD…MLHS). S548 and S558 each carry phosphoserine. A TIR domain is found at 560–703 (DTPDVFISYR…KIIRFLQGRP (144 aa)). NAD(+) contacts are provided by residues 569-570 (RR) and E599. Residue E642 is part of the active site. Over residues 703–716 (PSQDSSAGSDTSLE) the composition is skewed to polar residues. The segment at 703–724 (PSQDSSAGSDTSLEGATPMGLP) is disordered.

The protein belongs to the SARM1 family. In terms of assembly, homooctamer; forms an octameric ring via SAM domains. Interacts with TICAM1/TRIF and thereby interferes with TICAM1/TRIF function. Interacts with SDC2 (via cytoplasmic domain) and MAPK10/JNK3. In terms of processing, phosphorylation at Ser-548 by JNK kinases (MAPK8, MAPK9 and /or MAPK10) enhance the NAD(+) hydrolase (NADase) activity. Phosphorylation at Ser-548 and subsequent activation takes place in response to oxidative stress conditions and inhibits mitochondrial respiration. Widely expressed in the brain and neurons (at protein level). Expressed in photoreceptor cells of the neural retina.

The protein resides in the cytoplasm. It localises to the cell projection. It is found in the axon. The protein localises to the dendrite. Its subcellular location is the synapse. The protein resides in the mitochondrion. The enzyme catalyses NAD(+) + H2O = ADP-D-ribose + nicotinamide + H(+). It carries out the reaction NAD(+) = cyclic ADP-beta-D-ribose + nicotinamide + H(+). The catalysed reaction is NADP(+) + H2O = ADP-D-ribose 2'-phosphate + nicotinamide + H(+). Autoinhibited: in the inactive state, the enzymatic TIR domain is held apart by the autoinhibiting ARM repeats. NAD(+)-binding to ARM repeats maintains an inactive state by promoting interaction between ARM repeats and the TIR domain, thereby facilitating inhibition of the enzymatic TIR domain. Following activation, possibly by nicotinamide mononucleotide (NMN), auto-inhibitory interactions are released, allowing self-association of the TIR domains and subsequent activation of the NAD(+) hydrolase (NADase) activity. Self-association of TIR domains is facilitated by the octamer of SAM domains. Its function is as follows. NAD(+) hydrolase, which plays a key role in axonal degeneration following injury by regulating NAD(+) metabolism. Acts as a negative regulator of MYD88- and TRIF-dependent toll-like receptor signaling pathway by promoting Wallerian degeneration, an injury-induced form of programmed subcellular death which involves degeneration of an axon distal to the injury site. Wallerian degeneration is triggered by NAD(+) depletion: in response to injury, SARM1 is activated and catalyzes cleavage of NAD(+) into ADP-D-ribose (ADPR), cyclic ADPR (cADPR) and nicotinamide; NAD(+) cleavage promoting cytoskeletal degradation and axon destruction. Also able to hydrolyze NADP(+), but not other NAD(+)-related molecules. Can activate neuronal cell death in response to stress. Regulates dendritic arborization through the MAPK4-JNK pathway. Involved in innate immune response: inhibits both TICAM1/TRIF- and MYD88-dependent activation of JUN/AP-1, TRIF-dependent activation of NF-kappa-B and IRF3, and the phosphorylation of MAPK14/p38. In Mus musculus (Mouse), this protein is NAD(+) hydrolase SARM1.